Here is a 747-residue protein sequence, read N- to C-terminus: Polyribonucleotide nucleotidyltransferase (747 aa).

Mg(2+) is bound by residues Asp493 and Asp499. Residues 560–619 (PRIITLQINPEKIGALIGPGGKTVRGITEATGAQIDIEEDGRVYISTPDAAAAQQAVAMV) enclose the KH domain. Positions 629 to 698 (GDIFLGKVVR…GTGKVSLSRR (70 aa)) constitute an S1 motif domain. Residues 705-747 (TAEDRRAAGAGRGLRDGGGRSGGSDRGGDRGPRGDDRQRPRRR) form a disordered region. Composition is skewed to basic and acidic residues over residues 706–722 (AEDR…RDGG) and 730–747 (RGGD…PRRR).

Belongs to the polyribonucleotide nucleotidyltransferase family. Mg(2+) serves as cofactor.

It is found in the cytoplasm. It catalyses the reaction RNA(n+1) + phosphate = RNA(n) + a ribonucleoside 5'-diphosphate. Involved in mRNA degradation. Catalyzes the phosphorolysis of single-stranded polyribonucleotides processively in the 3'- to 5'-direction. The polypeptide is Polyribonucleotide nucleotidyltransferase (Roseiflexus sp. (strain RS-1)).